The chain runs to 358 residues: Putative glycylpeptide N-tetradecanoyltransferase (358 aa).

It belongs to the NMT family.

The catalysed reaction is N-terminal glycyl-[protein] + tetradecanoyl-CoA = N-tetradecanoylglycyl-[protein] + CoA + H(+). Functionally, adds a myristoyl group to the N-terminal glycine residue of certain proteins. In Acanthamoeba polyphaga (Amoeba), this protein is Putative glycylpeptide N-tetradecanoyltransferase.